Reading from the N-terminus, the 595-residue chain is Outer dynein arm-docking complex subunit 3 (595 aa).

The interval 1–69 (MTSPLCRAAS…RGAGKPSVHS (69 aa)) is disordered. Coiled coils occupy residues 94-327 (WNIK…REHL) and 385-473 (FAQL…ASKL).

As to quaternary structure, component of the outer dynein arm-docking complex along with ODAD1, ODAD2, ODAD4 and CLXN. Interacts with ODAD1. Interacts with PIERCE1 and PIERCE2; the interactions link the outer dynein arms docking complex (ODA-DC) to the internal microtubule inner proteins (MIP) in cilium axoneme.

Its subcellular location is the cytoplasm. It localises to the cytoskeleton. It is found in the cilium basal body. The protein localises to the microtubule organizing center. The protein resides in the centrosome. Its subcellular location is the centriole. It localises to the cilium axoneme. Functionally, component of the outer dynein arm-docking complex (ODA-DC) that mediates outer dynein arms (ODA) binding onto the doublet microtubule. Involved in mediating assembly of both ODAs and their axonemal docking complex onto ciliary microtubules. This is Outer dynein arm-docking complex subunit 3 from Homo sapiens (Human).